A 275-amino-acid polypeptide reads, in one-letter code: 2'-N-acetylparomamine deacetylase (275 aa).

Zn(2+) is bound by residues histidine 14, aspartate 17, and histidine 166.

Belongs to the PIGL family. Zn(2+) serves as cofactor.

The enzyme catalyses 2'-N-acetylparomamine + H2O = paromamine + acetate. It functions in the pathway antibiotic biosynthesis; butirosin biosynthesis. Its function is as follows. Deacetylase involved in the biosynthesis of butirosin by mediating deacetylation of 2'-N-acetylparomamine. This chain is 2'-N-acetylparomamine deacetylase (btrD), found in Niallia circulans (Bacillus circulans).